The primary structure comprises 142 residues: Large ribosomal subunit protein uL16 (142 aa).

It belongs to the universal ribosomal protein uL16 family. In terms of assembly, part of the 50S ribosomal subunit.

Functionally, binds 23S rRNA and is also seen to make contacts with the A and possibly P site tRNAs. In Aquifex aeolicus (strain VF5), this protein is Large ribosomal subunit protein uL16.